We begin with the raw amino-acid sequence, 263 residues long: Uroplakin-3b-like protein 1 (263 aa).

The signal sequence occupies residues 1 to 33 (MDNSWRLGPAIGLSAGQSQLLVSLLLLLTRVQP). The Extracellular portion of the chain corresponds to 34 to 204 (GTDVAAPEHI…PGPQSPGTVV (171 aa)). Asn-51, Asn-76, and Asn-91 each carry an N-linked (GlcNAc...) asparagine glycan. A helical membrane pass occupies residues 205–225 (IIAILSILLAVLLTVLLAVLI). Residues 226–263 (YTCFNSCRSTSLSGPEEAGSVRRYTTHLAFSTPAEGAS) are Cytoplasmic-facing.

Belongs to the uroplakin-3 family.

The protein resides in the membrane. In Homo sapiens (Human), this protein is Uroplakin-3b-like protein 1.